A 223-amino-acid chain; its full sequence is ATP-dependent dethiobiotin synthetase BioD (223 aa).

Threonine 16 serves as a coordination point for Mg(2+). The active site involves lysine 37. Serine 41 serves as a coordination point for substrate. Positions 50 and 111 each coordinate Mg(2+). ATP contacts are provided by residues aspartate 50, 111–114 (EGAG), and 171–172 (NR).

This sequence belongs to the dethiobiotin synthetase family. As to quaternary structure, homodimer. The cofactor is Mg(2+).

The protein localises to the cytoplasm. The enzyme catalyses (7R,8S)-7,8-diammoniononanoate + CO2 + ATP = (4R,5S)-dethiobiotin + ADP + phosphate + 3 H(+). It participates in cofactor biosynthesis; biotin biosynthesis; biotin from 7,8-diaminononanoate: step 1/2. Catalyzes a mechanistically unusual reaction, the ATP-dependent insertion of CO2 between the N7 and N8 nitrogen atoms of 7,8-diaminopelargonic acid (DAPA, also called 7,8-diammoniononanoate) to form a ureido ring. This Anaeromyxobacter dehalogenans (strain 2CP-C) protein is ATP-dependent dethiobiotin synthetase BioD.